The chain runs to 187 residues: MAAEVKKGIDTTKNPIPFEMAQIPGPEMAKTYLPKVIGAIIRKAKRPLLVVGAELFDDPVMFDKMIEMGKMGIPIAATAHSVKGFVDRGYLENVYQIGLHPLTNFLRFPDWKGLDGQGQYDVVIFLGIYYKFANGMLSTLKNFNRDIKRVSIDRYYHVNADMTFGNLAFNPDDYHAAVDEVIAAMKK.

Residue Met1 is modified to Blocked amino end (Met).

This sequence belongs to the CdhB family. Heterotetramer of two alpha and two epsilon subunits. The ACDS complex is made up of alpha, epsilon, beta, gamma and delta subunits with a probable stoichiometry of (alpha(2)epsilon(2))(4)-beta(8)-(gamma(1)delta(1))(8).

Part of a complex that catalyzes the reversible cleavage of acetyl-CoA, allowing autotrophic growth from CO(2). The alpha-epsilon subcomponent functions as a carbon monoxide dehydrogenase. The precise role of the epsilon subunit is unclear; it may have a stabilizing role within the alpha(2)epsilon(2) component and/or be involved in electron transfer to FAD during a potential FAD-mediated CO oxidation. This chain is Acetyl-CoA decarbonylase/synthase complex subunit epsilon, found in Methanothrix soehngenii (Methanosaeta concilii).